Here is a 576-residue protein sequence, read N- to C-terminus: Arginine--tRNA ligase (576 aa).

A 'HIGH' region motif is present at residues 121–131 (PNLAKEMHVGH).

The protein belongs to the class-I aminoacyl-tRNA synthetase family. As to quaternary structure, monomer.

The protein localises to the cytoplasm. It carries out the reaction tRNA(Arg) + L-arginine + ATP = L-arginyl-tRNA(Arg) + AMP + diphosphate. The protein is Arginine--tRNA ligase of Alteromonas mediterranea (strain DSM 17117 / CIP 110805 / LMG 28347 / Deep ecotype).